The primary structure comprises 229 residues: Enolase-phosphatase E1 (229 aa).

The disordered stretch occupies residues Arg-207–Ala-229. Residues Arg-218–Ala-229 are compositionally biased toward basic and acidic residues.

It belongs to the HAD-like hydrolase superfamily. MasA/MtnC family. As to quaternary structure, monomer. The cofactor is Mg(2+).

The catalysed reaction is 5-methylsulfanyl-2,3-dioxopentyl phosphate + H2O = 1,2-dihydroxy-5-(methylsulfanyl)pent-1-en-3-one + phosphate. Its pathway is amino-acid biosynthesis; L-methionine biosynthesis via salvage pathway; L-methionine from S-methyl-5-thio-alpha-D-ribose 1-phosphate: step 3/6. It participates in amino-acid biosynthesis; L-methionine biosynthesis via salvage pathway; L-methionine from S-methyl-5-thio-alpha-D-ribose 1-phosphate: step 4/6. Functionally, bifunctional enzyme that catalyzes the enolization of 2,3-diketo-5-methylthiopentyl-1-phosphate (DK-MTP-1-P) into the intermediate 2-hydroxy-3-keto-5-methylthiopentenyl-1-phosphate (HK-MTPenyl-1-P), which is then dephosphorylated to form the acireductone 1,2-dihydroxy-3-keto-5-methylthiopentene (DHK-MTPene). The polypeptide is Enolase-phosphatase E1 (Klebsiella pneumoniae subsp. pneumoniae (strain ATCC 700721 / MGH 78578)).